The following is a 240-amino-acid chain: Eukaryotic translation initiation factor 3 subunit J (240 aa).

A disordered region spans residues 1–66 (MADDWESAAD…VPVKTKPSKA (66 aa)). A compositionally biased stretch (acidic residues) spans 27–45 (GEDDDDDVKESWEDEEEKK).

Belongs to the eIF-3 subunit J family. In terms of assembly, component of the eukaryotic translation initiation factor 3 (eIF-3) complex. The eIF-3 complex interacts with pix.

The protein resides in the cytoplasm. In terms of biological role, component of the eukaryotic translation initiation factor 3 (eIF-3) complex, which is involved in protein synthesis of a specialized repertoire of mRNAs and, together with other initiation factors, stimulates binding of mRNA and methionyl-tRNAi to the 40S ribosome. The eIF-3 complex specifically targets and initiates translation of a subset of mRNAs involved in cell proliferation. The protein is Eukaryotic translation initiation factor 3 subunit J of Drosophila persimilis (Fruit fly).